Reading from the N-terminus, the 575-residue chain is Glycine--tRNA ligase (575 aa).

Positions 96 and 162 each coordinate substrate. ATP is bound by residues 194-196 (RNE), 204-209 (IRLREF), 327-328 (EC), and 450-453 (GIDR). 209-213 (FTQAE) contributes to the substrate binding site. 446 to 450 (EPSYG) contacts substrate.

It belongs to the class-II aminoacyl-tRNA synthetase family.

The protein localises to the cytoplasm. The enzyme catalyses tRNA(Gly) + glycine + ATP = glycyl-tRNA(Gly) + AMP + diphosphate. Functionally, catalyzes the attachment of glycine to tRNA(Gly). This is Glycine--tRNA ligase from Methanococcus maripaludis (strain C5 / ATCC BAA-1333).